Reading from the N-terminus, the 239-residue chain is Ribosomal RNA small subunit methyltransferase G (239 aa).

S-adenosyl-L-methionine-binding positions include G76, F81, 99–101, 128–129, and R147; these read DSS and IE.

This sequence belongs to the methyltransferase superfamily. RNA methyltransferase RsmG family.

The protein resides in the cytoplasm. Its function is as follows. Specifically methylates the N7 position of a guanine in 16S rRNA. In Prochlorococcus marinus subsp. pastoris (strain CCMP1986 / NIES-2087 / MED4), this protein is Ribosomal RNA small subunit methyltransferase G.